Consider the following 158-residue polypeptide: Transcription elongation factor GreA (158 aa).

Residues Thr-3 to Ala-75 adopt a coiled-coil conformation.

The protein belongs to the GreA/GreB family.

In terms of biological role, necessary for efficient RNA polymerase transcription elongation past template-encoded arresting sites. The arresting sites in DNA have the property of trapping a certain fraction of elongating RNA polymerases that pass through, resulting in locked ternary complexes. Cleavage of the nascent transcript by cleavage factors such as GreA or GreB allows the resumption of elongation from the new 3'terminus. GreA releases sequences of 2 to 3 nucleotides. The sequence is that of Transcription elongation factor GreA from Bacillus cytotoxicus (strain DSM 22905 / CIP 110041 / 391-98 / NVH 391-98).